The primary structure comprises 550 residues: Coiled-coil domain-containing protein 102A (550 aa).

Disordered regions lie at residues 1–69 (MSHG…DGDW) and 138–247 (GARR…ATEE). 3 positions are modified to phosphoserine: Ser12, Ser26, and Ser28. The span at 37 to 61 (SLPPTPPSGTPSPGPPPALPLPPAP) shows a compositional bias: pro residues. Residues 72–161 (REELRLRELE…ARGRELARLR (90 aa)) adopt a coiled-coil conformation. 2 stretches are compositionally biased toward basic and acidic residues: residues 138-159 (GARR…ELAR) and 169-188 (QTRD…DVGS). Coiled-coil stretches lie at residues 263–396 (QKVL…RRQT) and 427–518 (KLKK…NAPL). Disordered stretches follow at residues 472 to 497 (DELD…QSEN) and 509 to 550 (LRRQ…IQVA). Residues 530–550 (EEAEDGTSDLDEDEDLQIQVA) show a composition bias toward acidic residues. A Phosphoserine modification is found at Ser537.

This is Coiled-coil domain-containing protein 102A (CCDC102A) from Homo sapiens (Human).